An 81-amino-acid polypeptide reads, in one-letter code: Protein Vpu (81 aa).

Residues 1–7 (MQPLVII) lie on the Extracellular side of the membrane. A helical membrane pass occupies residues 8–28 (AIAALVVAIIIAIVVWTIVYI). At 29-81 (EYRRIKRQRKIDCLIDRIRERAEDSGNESEGEREELSKLVEMGHHAPWDVDDL) the chain is on the cytoplasmic side. A disordered region spans residues 50 to 81 (AEDSGNESEGEREELSKLVEMGHHAPWDVDDL). Residues Ser-53 and Ser-57 each carry the phosphoserine; by host CK2 modification. Residues 62-81 (EELSKLVEMGHHAPWDVDDL) are compositionally biased toward basic and acidic residues.

It belongs to the HIV-1 VPU protein family. In terms of assembly, homopentamer. Interacts with host CD4 and BRTC; these interactions induce proteasomal degradation of CD4. Interacts with host BST2; this interaction leads to the degradation of host BST2. Interacts with host FBXW11. Interacts with host AP1M1; this interaction plays a role in the mistrafficking and subsequent degradation of host BST2. Interacts with host RANBP2; this interaction allows Vpu to down-regulate host BLM sumoylation. In terms of processing, phosphorylated by host CK2. This phosphorylation is necessary for interaction with human BTRC and degradation of CD4.

The protein localises to the host membrane. Ion channel activity is inhibited by hexamethylene amiloride in vitro. Enhances virion budding by targeting host CD4 and Tetherin/BST2 to proteasome degradation. Degradation of CD4 prevents any unwanted premature interactions between viral Env and its host receptor CD4 in the endoplasmic reticulum. Degradation of antiretroviral protein Tetherin/BST2 is important for virion budding, as BST2 tethers new viral particles to the host cell membrane. Mechanistically, Vpu bridges either CD4 or BST2 to BTRC, a substrate recognition subunit of the Skp1/Cullin/F-box protein E3 ubiquitin ligase, induces their ubiquitination and subsequent proteasomal degradation. The alteration of the E3 ligase specificity by Vpu seems to promote the degradation of host IKBKB, leading to NF-kappa-B down-regulation and subsequent apoptosis. Acts as a viroporin that forms an oligomeric ion channel in membranes. Modulates the host DNA repair mechanisms to promote degradation of nuclear viral cDNA in cells that are already productively infected in order to suppress immune sensing and proviral hyper-integration (superinfection). Manipulates PML-NBs and modulates SUMOylation of host BLM protein thereby enhancing its DNA-end processing activity toward viral unintegrated linear DNA. Also inhibits RAD52-mediated homologous repair of viral cDNA, preventing the generation of dead-end circular forms of single copies of the long terminal repeat and permitting sustained nucleolytic attack. The polypeptide is Protein Vpu (Human immunodeficiency virus type 1 group M subtype D (isolate NDK) (HIV-1)).